The chain runs to 258 residues: Large ribosomal subunit protein uL2x (258 aa).

A disordered region spans residues 211–231 (HGGGNHQHIGHASTVRRDAPP).

The protein belongs to the universal ribosomal protein uL2 family.

This is Large ribosomal subunit protein uL2x (RPL8C) from Arabidopsis thaliana (Mouse-ear cress).